Here is a 147-residue protein sequence, read N- to C-terminus: Small ribosomal subunit protein eS19 (147 aa).

This sequence belongs to the eukaryotic ribosomal protein eS19 family. As to quaternary structure, component of the small ribosomal subunit.

It localises to the cytoplasm. It is found in the nucleus. Its function is as follows. Component of the small ribosomal subunit. The ribosome is a large ribonucleoprotein complex responsible for the synthesis of proteins in the cell. Required for pre-rRNA processing and maturation of 40S ribosomal subunits. In Ictalurus punctatus (Channel catfish), this protein is Small ribosomal subunit protein eS19 (rps19).